A 632-amino-acid polypeptide reads, in one-letter code: Extracellular metalloproteinase 2 (632 aa).

Positions 1 to 19 (MHGLLLAGLAAALPLGVAG) are cleaved as a signal peptide. The propeptide occupies 20 to 244 (LPARQQSGLS…VHNVVDYVAS (225 aa)). N-linked (GlcNAc...) asparagine glycosylation occurs at Asn270. Position 429 (His429) interacts with Zn(2+). Glu430 is a catalytic residue. Zn(2+) is bound at residue His433.

It belongs to the peptidase M36 family. Zn(2+) serves as cofactor.

It localises to the secreted. Its function is as follows. Secreted metalloproteinase probably acting as a virulence factor. This is Extracellular metalloproteinase 2 (MEP2) from Trichophyton rubrum (Athlete's foot fungus).